Here is a 207-residue protein sequence, read N- to C-terminus: Transcriptional regulatory protein RcsA (207 aa).

In terms of domain architecture, HTH luxR-type spans 131 to 196; it reads LTLPTLSLSK…VIYHIVRLTE (66 aa). The H-T-H motif DNA-binding region spans 155 to 174; that stretch reads TSQISTQMNIKAKTVSSHKG.

This sequence belongs to the RcsA family.

Functionally, component of the Rcs signaling system, which controls transcription of numerous genes. Binds to DNA to regulate expression of genes. The sequence is that of Transcriptional regulatory protein RcsA from Klebsiella aerogenes (Enterobacter aerogenes).